A 211-amino-acid chain; its full sequence is Large ribosomal subunit protein bL25 (211 aa).

The segment at 186–211 (GRALQSMDAAESAVEQPGEQPATAAG) is disordered.

It belongs to the bacterial ribosomal protein bL25 family. CTC subfamily. Part of the 50S ribosomal subunit; part of the 5S rRNA/L5/L18/L25 subcomplex. Contacts the 5S rRNA. Binds to the 5S rRNA independently of L5 and L18.

In terms of biological role, this is one of the proteins that binds to the 5S RNA in the ribosome where it forms part of the central protuberance. This Gloeobacter violaceus (strain ATCC 29082 / PCC 7421) protein is Large ribosomal subunit protein bL25.